The following is a 224-amino-acid chain: Transcriptional regulatory protein DltR (224 aa).

The Response regulatory domain occupies 2-116; that stretch reads RLLVVEDEKS…ELLARIRLRT (115 aa). Residue aspartate 51 is modified to 4-aspartylphosphate. The segment at residues 124-222 is a DNA-binding region (ompR/PhoB-type); sequence ANQLRLGNIR…TKGFGYSLEE (99 aa).

In terms of processing, phosphorylated by DltS.

It localises to the cytoplasm. In terms of biological role, member of the two-component regulatory system DltS/DltR. Regulates the expression of the dlt operon. The sequence is that of Transcriptional regulatory protein DltR (dltR) from Streptococcus agalactiae serotype III (strain NEM316).